The primary structure comprises 482 residues: Succinate-semialdehyde dehydrogenase [NADP(+)] GabD (482 aa).

NADP(+) is bound by residues 156-157 (WN), 180-183 (KPAS), and 233-234 (GS). Glutamate 255 serves as the catalytic Proton acceptor. Leucine 256 is an NADP(+) binding site. Cysteine 289 serves as the catalytic Nucleophile. Glutamate 386 provides a ligand contact to NADP(+).

This sequence belongs to the aldehyde dehydrogenase family. Homotetramer.

It carries out the reaction succinate semialdehyde + NADP(+) + H2O = succinate + NADPH + 2 H(+). The enzyme catalyses 5-oxopentanoate + NADP(+) + H2O = glutarate + NADPH + 2 H(+). It functions in the pathway amino-acid degradation; 4-aminobutanoate degradation. The protein operates within amino-acid degradation. Catalyzes the NADP(+)-dependent oxidation of succinate semialdehyde to succinate. Thereby functions in a GABA degradation pathway that allows some E.coli strains to utilize GABA as a nitrogen source for growth. Also catalyzes the conversion of glutarate semialdehyde to glutarate, as part of a L-lysine degradation pathway that proceeds via cadaverine, glutarate and L-2-hydroxyglutarate. The sequence is that of Succinate-semialdehyde dehydrogenase [NADP(+)] GabD (gabD) from Escherichia coli (strain K12).